Here is a 20-residue protein sequence, read N- to C-terminus: T cell receptor alpha joining 42 (20 aa).

The tract at residues 1 to 20 (YGGSQGNLIFGKGTKLSVKP) is disordered.

In terms of assembly, alpha-beta TR is a heterodimer composed of an alpha and beta chain; disulfide-linked. The alpha-beta TR is associated with the transmembrane signaling CD3 coreceptor proteins to form the TR-CD3 (TcR or TCR). The assembly of alpha-beta TR heterodimers with CD3 occurs in the endoplasmic reticulum where a single alpha-beta TR heterodimer associates with one CD3D-CD3E heterodimer, one CD3G-CD3E heterodimer and one CD247 homodimer forming a stable octameric structure. CD3D-CD3E and CD3G-CD3E heterodimers preferentially associate with TR alpha and TR beta chains, respectively. The association of the CD247 homodimer is the last step of TcR assembly in the endoplasmic reticulum and is required for transport to the cell surface.

The protein localises to the cell membrane. In terms of biological role, j region of the variable domain of T cell receptor (TR) alpha chain that participates in the antigen recognition. Alpha-beta T cell receptors are antigen specific receptors which are essential to the immune response and are present on the cell surface of T lymphocytes. Recognize peptide-major histocompatibility (MH) (pMH) complexes that are displayed by antigen presenting cells (APC), a prerequisite for efficient T cell adaptive immunity against pathogens. Binding of alpha-beta TR to pMH complex initiates TR-CD3 clustering on the cell surface and intracellular activation of LCK that phosphorylates the ITAM motifs of CD3G, CD3D, CD3E and CD247 enabling the recruitment of ZAP70. In turn, ZAP70 phosphorylates LAT, which recruits numerous signaling molecules to form the LAT signalosome. The LAT signalosome propagates signal branching to three major signaling pathways, the calcium, the mitogen-activated protein kinase (MAPK) kinase and the nuclear factor NF-kappa-B (NF-kB) pathways, leading to the mobilization of transcription factors that are critical for gene expression and essential for T cell growth and differentiation. The T cell repertoire is generated in the thymus, by V-(D)-J rearrangement. This repertoire is then shaped by intrathymic selection events to generate a peripheral T cell pool of self-MH restricted, non-autoaggressive T cells. Post-thymic interaction of alpha-beta TR with the pMH complexes shapes TR structural and functional avidity. This Homo sapiens (Human) protein is T cell receptor alpha joining 42.